We begin with the raw amino-acid sequence, 197 residues long: MDYSKLPSQEIERLARTIHPGAWAIEPERPLATLLGSCVAVCLFDPQARVGGLNHFMLPNIRRGSNDDVDSLLSGAYAMEALLNALLQRGAKKLRLQAKAFGGGTIINTSGPSMSIGLRNAEFTKEWLDREGIPLLASDFLGPWSRKVLFLPMTGDAFCRRMVTNMATAETIAREEKSYADTLAQKPKSTEKKIELF.

This sequence belongs to the CheD family.

It catalyses the reaction L-glutaminyl-[protein] + H2O = L-glutamyl-[protein] + NH4(+). In terms of biological role, probably deamidates glutamine residues to glutamate on methyl-accepting chemotaxis receptors (MCPs), playing an important role in chemotaxis. This Dechloromonas aromatica (strain RCB) protein is Probable chemoreceptor glutamine deamidase CheD 2.